The primary structure comprises 222 residues: Putative thymidylate synthase (222 aa).

The active site involves cysteine 139.

The protein belongs to the thymidylate synthase family. Archaeal-type ThyA subfamily. Monomer.

It is found in the cytoplasm. The protein operates within pyrimidine metabolism; dTTP biosynthesis. May catalyze the biosynthesis of dTMP using an unknown cosubstrate. This chain is Putative thymidylate synthase, found in Methanocaldococcus jannaschii (strain ATCC 43067 / DSM 2661 / JAL-1 / JCM 10045 / NBRC 100440) (Methanococcus jannaschii).